Consider the following 381-residue polypeptide: Succinyl-diaminopimelate desuccinylase (381 aa).

Residue H72 participates in Zn(2+) binding. The active site involves D74. D105 is a Zn(2+) binding site. E139 serves as the catalytic Proton acceptor. The Zn(2+) site is built by E140, E168, and H354.

It belongs to the peptidase M20A family. DapE subfamily. Homodimer. It depends on Zn(2+) as a cofactor. Co(2+) is required as a cofactor.

It carries out the reaction N-succinyl-(2S,6S)-2,6-diaminopimelate + H2O = (2S,6S)-2,6-diaminopimelate + succinate. It functions in the pathway amino-acid biosynthesis; L-lysine biosynthesis via DAP pathway; LL-2,6-diaminopimelate from (S)-tetrahydrodipicolinate (succinylase route): step 3/3. In terms of biological role, catalyzes the hydrolysis of N-succinyl-L,L-diaminopimelic acid (SDAP), forming succinate and LL-2,6-diaminopimelate (DAP), an intermediate involved in the bacterial biosynthesis of lysine and meso-diaminopimelic acid, an essential component of bacterial cell walls. The polypeptide is Succinyl-diaminopimelate desuccinylase (Shewanella sp. (strain MR-7)).